The primary structure comprises 556 residues: Arginine--tRNA ligase (556 aa).

A 'HIGH' region motif is present at residues 132–142 (ANPTGSLHLGH).

This sequence belongs to the class-I aminoacyl-tRNA synthetase family. In terms of assembly, monomer.

The protein localises to the cytoplasm. It carries out the reaction tRNA(Arg) + L-arginine + ATP = L-arginyl-tRNA(Arg) + AMP + diphosphate. This chain is Arginine--tRNA ligase, found in Anoxybacillus flavithermus (strain DSM 21510 / WK1).